The chain runs to 635 residues: Interferon-induced GTP-binding protein Mx2 (635 aa).

In terms of domain architecture, Dynamin-type G spans 31–304 (DLALPAIAVI…LVQHIEKSMP (274 aa)). The interval 41–48 (GDQSSGKS) is G1 motif. 41–48 (GDQSSGKS) contacts GTP. Residues 66-68 (VTR) form a G2 motif region. The segment at 142–145 (DLPG) is G3 motif. Residues 142–146 (DLPGI) and 211–214 (TKPD) contribute to the GTP site. The segment at 211–214 (TKPD) is G4 motif. The tract at residues 243-246 (KCRG) is G5 motif. The region spanning 549-635 (LREMMLHLKS…MKAHNYLVEF (87 aa)) is the GED domain.

The protein belongs to the TRAFAC class dynamin-like GTPase superfamily. Dynamin/Fzo/YdjA family.

The protein resides in the nucleus. Its subcellular location is the cytoplasm. In terms of biological role, does not inhibit strain RB-1 of the fish pathogen, infectious hematopoietic necrosis virus (IHNV). The protein is Interferon-induced GTP-binding protein Mx2 of Oncorhynchus mykiss (Rainbow trout).